Consider the following 78-residue polypeptide: uncharacterized protein (78 aa).

The disordered stretch occupies residues 20 to 78 (LQDLFPPHFGNEEADEDDEDGDKYGDDDGEFYGDNDGDNDGDNDGVNDGVGDGPPSTLL). Acidic residues predominate over residues 31–64 (EEADEDDEDGDKYGDDDGEFYGDNDGDNDGDNDG).

This is an uncharacterized protein from Dictyostelium discoideum (Social amoeba).